The chain runs to 331 residues: uncharacterized protein (331 aa).

To bacterial alkanal monooxygenase alpha and beta chains.

This is an uncharacterized protein from Bacillus subtilis (strain 168).